We begin with the raw amino-acid sequence, 398 residues long: MKITSSAAALALVASAVAAPSPTTQDKPTKRQAGCASAVSLNAQTNVFKQYTLHANNFYRKEIEELAIPNLSDPSLEAAARKVADTGSFVWLDTIANVDRLEPALAEVPCNEILGVVVYDLPGRDCAAKASNGELKVGELNRYKTEFIDRIASILKAHPNTAVALVIEPDSLPNLVTNSDVQACRNSAAGYRDGVAYALKTLNLPNVVQYIDAGHGGWLGWDANLKPGAEELAKAYKAAGSPKQFRGIATNVAGWNAWDLSPGEFSSASDAKYNSCQNERTYVNTFGQRLKAAGMPNHAIVDTGRNGVQGLREEWGNWCNVDGAGFGRPPSADTGLELADAFVWVKPGGESDGTSDSSAVRYDSFCGKPDAFQPSPEAGAWHQEYFEMLLRNSNPSLL.

Residues 1–18 (MKITSSAAALALVASAVA) form the signal peptide. N70 carries an N-linked (GlcNAc...) asparagine glycan. D125 is a catalytic residue. The active-site Proton donor is D170. The substrate site is built by W218, W318, K346, and E350.

This sequence belongs to the glycosyl hydrolase 6 (cellulase B) family. Both N- and O-glycosylated.

It localises to the secreted. It catalyses the reaction Hydrolysis of (1-&gt;4)-beta-D-glucosidic linkages in cellulose and cellotetraose, releasing cellobiose from the non-reducing ends of the chains.. Exoglucanase that plays an important function in biomass degradation by catalyzing the hydrolysis of the non-reducing end beta-1,4-glucosidic linkages in cellulose and cellotetraose to release cellobiose. Hydrolyzes crystalline and amorphous cellulose but is inactive on hydroxyethyl cellulose, mannan, galactomannan, xyloglucan, arabinoxylan, arabinan, xylan, and pectin. This Podospora anserina (strain S / ATCC MYA-4624 / DSM 980 / FGSC 10383) (Pleurage anserina) protein is 1,4-beta-D-glucan cellobiohydrolase CEL6C.